The primary structure comprises 88 residues: Small ribosomal subunit protein uS17 (88 aa).

This sequence belongs to the universal ribosomal protein uS17 family. Part of the 30S ribosomal subunit.

In terms of biological role, one of the primary rRNA binding proteins, it binds specifically to the 5'-end of 16S ribosomal RNA. The sequence is that of Small ribosomal subunit protein uS17 from Ectopseudomonas mendocina (strain ymp) (Pseudomonas mendocina).